A 103-amino-acid chain; its full sequence is Pyrimidine/purine nucleoside phosphorylase (103 aa).

Belongs to the nucleoside phosphorylase PpnP family.

It catalyses the reaction a purine D-ribonucleoside + phosphate = a purine nucleobase + alpha-D-ribose 1-phosphate. It carries out the reaction adenosine + phosphate = alpha-D-ribose 1-phosphate + adenine. The enzyme catalyses cytidine + phosphate = cytosine + alpha-D-ribose 1-phosphate. The catalysed reaction is guanosine + phosphate = alpha-D-ribose 1-phosphate + guanine. It catalyses the reaction inosine + phosphate = alpha-D-ribose 1-phosphate + hypoxanthine. It carries out the reaction thymidine + phosphate = 2-deoxy-alpha-D-ribose 1-phosphate + thymine. The enzyme catalyses uridine + phosphate = alpha-D-ribose 1-phosphate + uracil. The catalysed reaction is xanthosine + phosphate = alpha-D-ribose 1-phosphate + xanthine. Catalyzes the phosphorolysis of diverse nucleosides, yielding D-ribose 1-phosphate and the respective free bases. Can use uridine, adenosine, guanosine, cytidine, thymidine, inosine and xanthosine as substrates. Also catalyzes the reverse reactions. In Methylobacillus flagellatus (strain ATCC 51484 / DSM 6875 / VKM B-1610 / KT), this protein is Pyrimidine/purine nucleoside phosphorylase.